Here is a 102-residue protein sequence, read N- to C-terminus: NADH-quinone oxidoreductase subunit K (102 aa).

Transmembrane regions (helical) follow at residues 6–26 (MEHGLLLAAVLFCIGLCGLLI), 30–50 (LLFILMSIEIMMNASALAFVV), and 65–85 (ILVISLAAAEASIGLALLLLL).

The protein belongs to the complex I subunit 4L family. NDH-1 is composed of 14 different subunits. Subunits NuoA, H, J, K, L, M, N constitute the membrane sector of the complex.

It localises to the cell inner membrane. It catalyses the reaction a quinone + NADH + 5 H(+)(in) = a quinol + NAD(+) + 4 H(+)(out). Its function is as follows. NDH-1 shuttles electrons from NADH, via FMN and iron-sulfur (Fe-S) centers, to quinones in the respiratory chain. The immediate electron acceptor for the enzyme in this species is believed to be ubiquinone. Couples the redox reaction to proton translocation (for every two electrons transferred, four hydrogen ions are translocated across the cytoplasmic membrane), and thus conserves the redox energy in a proton gradient. This is NADH-quinone oxidoreductase subunit K from Aeromonas hydrophila subsp. hydrophila (strain ATCC 7966 / DSM 30187 / BCRC 13018 / CCUG 14551 / JCM 1027 / KCTC 2358 / NCIMB 9240 / NCTC 8049).